Reading from the N-terminus, the 114-residue chain is Amphinase-4 (114 aa).

His-15 (proton acceptor) is an active-site residue. Intrachain disulfides connect Cys-26/Cys-79, Cys-41/Cys-85, Cys-59/Cys-100, and Cys-97/Cys-114. Asn-27 is a glycosylation site (N-linked (GlcNAc...) asparagine). 42–46 (KPVNT) is a substrate binding site. N-linked (GlcNAc...) asparagine glycosylation is found at Asn-67 and Asn-91. His-107 serves as the catalytic Proton donor.

It belongs to the pancreatic ribonuclease family. As to quaternary structure, monomer. There are at least five different forms arising from glycan heterogeneity.

The protein resides in the secreted. Functionally, endonuclease, hydrolyzes highly polymerized RNA, poly(U) and poly(C), and the dinucleotides CpA and UpA. Hydrolyzes rCA, rUA and rUG. Has cytotoxic activity against cultured human submaxillary gland carcinoma cells. The sequence is that of Amphinase-4 from Lithobates pipiens (Northern leopard frog).